A 460-amino-acid chain; its full sequence is Mitochondrial distribution and morphology protein 34 (460 aa).

An SMP-LTD domain is found at 1 to 196 (MSFKFDWESL…LPGIIHRLSQ (196 aa)). Basic residues predominate over residues 304–321 (HNHQAPKRRTIKYKRKSK). Disordered regions lie at residues 304–356 (HNHQ…PSRE) and 368–460 (EPSS…AYSG). Low complexity-rich tracts occupy residues 330 to 355 (STEV…TPSR) and 393 to 405 (SPPS…DTSL).

The protein belongs to the MDM34 family. In terms of assembly, component of the ER-mitochondria encounter structure (ERMES) or MDM complex, composed of MMM1, MDM10, MDM12 and MDM34.

The protein localises to the mitochondrion outer membrane. In terms of biological role, component of the ERMES/MDM complex, which serves as a molecular tether to connect the endoplasmic reticulum (ER) and mitochondria. Components of this complex are involved in the control of mitochondrial shape and protein biogenesis, and function in nonvesicular lipid trafficking between the ER and mitochondria. MDM34 is required for the interaction of the ER-resident membrane protein MMM1 and the outer mitochondrial membrane-resident beta-barrel protein MDM10. This chain is Mitochondrial distribution and morphology protein 34, found in Yarrowia lipolytica (strain CLIB 122 / E 150) (Yeast).